A 156-amino-acid chain; its full sequence is ATP synthase subunit b (156 aa).

The helical transmembrane segment at 7–27 (FFAQMVVFFILWWVVAKFIWP) threads the bilayer.

It belongs to the ATPase B chain family. In terms of assembly, F-type ATPases have 2 components, F(1) - the catalytic core - and F(0) - the membrane proton channel. F(1) has five subunits: alpha(3), beta(3), gamma(1), delta(1), epsilon(1). F(0) has three main subunits: a(1), b(2) and c(10-14). The alpha and beta chains form an alternating ring which encloses part of the gamma chain. F(1) is attached to F(0) by a central stalk formed by the gamma and epsilon chains, while a peripheral stalk is formed by the delta and b chains.

The protein localises to the cell inner membrane. In terms of biological role, f(1)F(0) ATP synthase produces ATP from ADP in the presence of a proton or sodium gradient. F-type ATPases consist of two structural domains, F(1) containing the extramembraneous catalytic core and F(0) containing the membrane proton channel, linked together by a central stalk and a peripheral stalk. During catalysis, ATP synthesis in the catalytic domain of F(1) is coupled via a rotary mechanism of the central stalk subunits to proton translocation. Functionally, component of the F(0) channel, it forms part of the peripheral stalk, linking F(1) to F(0). The polypeptide is ATP synthase subunit b (Cupriavidus metallidurans (strain ATCC 43123 / DSM 2839 / NBRC 102507 / CH34) (Ralstonia metallidurans)).